We begin with the raw amino-acid sequence, 1380 residues long: DNA-directed RNA polymerase subunit beta (1380 aa).

It belongs to the RNA polymerase beta chain family. As to quaternary structure, the RNAP catalytic core consists of 2 alpha, 1 beta, 1 beta' and 1 omega subunit. When a sigma factor is associated with the core the holoenzyme is formed, which can initiate transcription.

It catalyses the reaction RNA(n) + a ribonucleoside 5'-triphosphate = RNA(n+1) + diphosphate. DNA-dependent RNA polymerase catalyzes the transcription of DNA into RNA using the four ribonucleoside triphosphates as substrates. This is DNA-directed RNA polymerase subunit beta from Ehrlichia canis (strain Jake).